Consider the following 328-residue polypeptide: Malate dehydrogenase (328 aa).

13–19 (GAAGQIS) lines the NAD(+) pocket. Positions 94 and 100 each coordinate substrate. Residues N107, Q114, and 131 to 133 (VGN) contribute to the NAD(+) site. Substrate-binding residues include N133 and R164. H189 acts as the Proton acceptor in catalysis.

Belongs to the LDH/MDH superfamily. MDH type 2 family.

The catalysed reaction is (S)-malate + NAD(+) = oxaloacetate + NADH + H(+). Functionally, catalyzes the reversible oxidation of malate to oxaloacetate. This Alcanivorax borkumensis (strain ATCC 700651 / DSM 11573 / NCIMB 13689 / SK2) protein is Malate dehydrogenase.